The primary structure comprises 79 residues: Serine rich endogenous peptide 2 (79 aa).

Residues 1–19 form the signal peptide; the sequence is MANNLGLVILLLVIVLVSC. The tract at residues 25–79 is disordered; sequence CALASPQKSRPSSEWRRKLIPVRSSRSPRSPSFAPKKPPPPPPSPPLSPSSPPSN. The SCOOP motif signature appears at 45–57; it reads PVRSSRSPRSPSF. A compositionally biased stretch (low complexity) spans 45 to 59; it reads PVRSSRSPRSPSFAP. Residues 49-51 carry the SxS motif essential for MIK2 binding motif; sequence SRS. The segment covering 60 to 79 has biased composition (pro residues); it reads KKPPPPPPSPPLSPSSPPSN.

The protein belongs to the serine rich endogenous peptide (SCOOP) phytocytokine family. In terms of assembly, interacts with MIK2 (via extracellular leucine-rich repeat domain); this interaction triggers the formation of complex between MIK2 and the BAK1/SERK3 and SERK4 coreceptors, and subsequent BAK1 activation by phosphorylation.

It is found in the cell membrane. It localises to the secreted. Its subcellular location is the extracellular space. The protein localises to the apoplast. Functionally, brassicaceae-specific phytocytokine (plant endogenous peptide released into the apoplast) perceived by MIK2 in a BAK1/SERK3 and SERK4 coreceptors-dependent manner, that modulates various physiological and antimicrobial processes including growth prevention and reactive oxygen species (ROS) response regulation. The chain is Serine rich endogenous peptide 2 from Arabidopsis thaliana (Mouse-ear cress).